The chain runs to 287 residues: Pyridoxal kinase PdxY (287 aa).

Residues S10 and 45-46 (TQ) each bind substrate. ATP is bound by residues D112, A144, E149, K182, and 209 to 212 (RPLV). A substrate-binding site is contributed by D224.

This sequence belongs to the pyridoxine kinase family. PdxY subfamily. In terms of assembly, homodimer. Requires Mg(2+) as cofactor.

It catalyses the reaction pyridoxal + ATP = pyridoxal 5'-phosphate + ADP + H(+). It participates in cofactor metabolism; pyridoxal 5'-phosphate salvage; pyridoxal 5'-phosphate from pyridoxal: step 1/1. Its function is as follows. Pyridoxal kinase involved in the salvage pathway of pyridoxal 5'-phosphate (PLP). Catalyzes the phosphorylation of pyridoxal to PLP. This Shigella sonnei (strain Ss046) protein is Pyridoxal kinase PdxY.